The following is a 110-amino-acid chain: Protein SPIRAL1-like 2 (110 aa).

The segment at 28 to 110 is disordered; sequence AVNKTPAETE…LDYLFGGGSN (83 aa). Low complexity predominate over residues 40-52; that stretch reads AHAPPTQAAAANA. The span at 63–82 shows a compositional bias: polar residues; it reads LNSNSANNYMRAEGQNTGNF. At serine 67 the chain carries Phosphoserine. A compositionally biased stretch (gly residues) spans 95–110; sequence PGGGSSLDYLFGGGSN.

Belongs to the SPIRAL1 family. In terms of tissue distribution, ubiquitous.

Its function is as follows. Acts redundantly with SPR1 in maintaining the cortical microtubules organization essential for anisotropic cell growth. The polypeptide is Protein SPIRAL1-like 2 (SP1L2) (Arabidopsis thaliana (Mouse-ear cress)).